The following is a 1065-amino-acid chain: Tubulin glycylase 3C (1065 aa).

Disordered regions lie at residues 1–146 (MSSL…REDK), 158–182 (IREQ…TKSK), 301–326 (STQK…DIAK), 341–360 (EKKR…KEQL), 381–482 (FFVD…GNGS), and 708–755 (NKQK…EKQM). A compositionally biased stretch (low complexity) spans 23–53 (QEGNQEDLNNQNDHNLNNNELDSLSSPPSDN). Over residues 54-63 (YNEEEFEQED) the composition is skewed to acidic residues. Residues 73 to 92 (QNASQNNISQTQRISQTQLP) are compositionally biased toward polar residues. Residues 122-146 (LMEKKKKEQEEKEKKELKLKKREDK) are compositionally biased toward basic and acidic residues. Residues 166 to 179 (LESQTEQSDHSNVT) show a composition bias toward polar residues. The span at 313-326 (EGDKEKDDKKDIAK) shows a compositional bias: basic and acidic residues. The span at 385–403 (VPEKKPKKEKKKNESKEDN) shows a compositional bias: basic and acidic residues. Residues 404–423 (IQITSPKLNSTKSLSSQITR) are compositionally biased toward polar residues. A compositionally biased stretch (basic and acidic residues) spans 424-450 (KTNDAKKVEKLPKIKDSNKENHSKERN). The segment covering 451 to 479 (EDNEEGDDGEYECDEGDEGASDGEDEDDG) has biased composition (acidic residues). In terms of domain architecture, TTL spans 633–1009 (YFEKDPDIEK…DYGMEKSKKA (377 aa)). Positions 709-721 (KQKPKKKKKKSKK) are enriched in basic residues. Residues 722-733 (DKQQGDTEKKEE) are compositionally biased toward basic and acidic residues. The span at 734 to 754 (EEGEAEDEEEDEEDEEEEEKQ) shows a compositional bias: acidic residues. ATP contacts are provided by residues 821–824 (QKYI), K834, and D836.

It localises to the cell projection. It is found in the cilium. The protein localises to the cytoplasm. Its subcellular location is the cytoskeleton. The protein resides in the cilium axoneme. Its function is as follows. Probable glycylase which modifies tubulin, generating side chains of glycine on the gamma-carboxyl groups of specific glutamate residues within the C-terminal tail of tubulin. The chain is Tubulin glycylase 3C (TTLL3C) from Tetrahymena thermophila (strain SB210).